We begin with the raw amino-acid sequence, 265 residues long: Speedy protein E12 (265 aa).

The segment at 1–80 is disordered; that stretch reads MGQILGKIMM…EPEKELAPEP (80 aa). A compositionally biased stretch (low complexity) spans 13–23; the sequence is QPQPQEEQSPQ. Positions 66-80 are enriched in acidic residues; sequence DESDDEPEKELAPEP.

It belongs to the Speedy/Ringo family.

The polypeptide is Speedy protein E12 (Homo sapiens (Human)).